A 326-amino-acid chain; its full sequence is Ankyrin repeat domain-containing protein 9 (326 aa).

A disordered region spans residues 1–20; the sequence is MPWDTRPGRSANGGPEGPGA. Residues 70 to 99 form an ANK 1 repeat; sequence SPSEALLYALVHDHQAYAHYLLATFPRCAL. The Important role in both nutrient sensing and binding/regulation of IMPDH2 signature appears at 108–109; the sequence is CC. ANK repeat units follow at residues 111 to 140 and 157 to 186; these read APGP…DFPV and GGGT…SPGL.

As to quaternary structure, part of an E3 ubiquitin-protein ligase complex with Elongin BC (ELOB and ELOC), CUL5 and ANKRD9. Interacts with IMPDH2; leading to ubiquitination of IMPDH2 and its subsequent proteasomal degradation.

It is found in the cytoplasmic vesicle. The protein resides in the cytoplasm. Its subcellular location is the cytosol. Its pathway is protein modification; protein ubiquitination. Functionally, substrate receptor subunit of a cullin-RING superfamily E3 ligase complex (CUL5-based E3 ubiquitin ligase complex) which mediates the ubiquitination and subsequent proteasomal degradation of target proteins. Depending of the metabolic state of the cell, promotes the proteasomal degradation of IMPDH2, the rate-limiting enzyme in GTP biosynthesis or protects IMPDH2 by stabilizing IMPDH2 filaments assembly. Implicated in different cellular processes, like copper homeostasis and cell proliferation. This Mus musculus (Mouse) protein is Ankyrin repeat domain-containing protein 9 (Ankrd9).